Reading from the N-terminus, the 130-residue chain is Mini-ribonuclease 3 (130 aa).

Asp19 is an active-site residue. A disordered region spans residues 69-91; sequence EQDVVRRGRNAKGHGAPKSADPA.

Belongs to the MrnC RNase family. In terms of assembly, homodimer. Mg(2+) is required as a cofactor.

It is found in the cytoplasm. In terms of biological role, involved in correct processing of both the 5' and 3' ends of 23S rRNA precursor. Processes 30S rRNA precursor transcript even in absence of ribonuclease 3 (Rnc); Rnc processes 30S rRNA into smaller rRNA precursors. This Symbiobacterium thermophilum (strain DSM 24528 / JCM 14929 / IAM 14863 / T) protein is Mini-ribonuclease 3.